The primary structure comprises 568 residues: MPKFDVSKRDLERLVGKEFTVEEWEDLFLYAKCELDDVWEENGEIYFKADSKDTNRPDLWSAEGIARQIRWALGFRRGLPEYEVEKSDVTVYVDEKLKDIRPYGVYAIVECLKLDEEALKQMINLQEKVALTFGRRRREVAIGIFDFDKVKPPIYYRAAEKTEKFVPLGFEEELTLEEILEKHEKGREYGHLIKDKPYYPLLVDSEGKVLSMPPIINSETTGRVTTETRNVFVDVTGWDLNKVMLALNVVVTALAERGGRIKSVKVVYPDFEIETPNLTPKSFEVELDYIRKLAGLDLSDGEIKDLLERMMYDVTLEDGKAKLLYPAFRDDIMHARDVLEDVLIAYGYNEIEPEEPKLAVQGRGDKFIEFEDAVRELMVGFGLQEVMTFNLTNREAQYGKMNLEYGRDYFNNPPAELVEIENPISPKWSALRNWLLPSLLDFLSQNTHEEYPQRLFEVGKATLIDESRETKTVSESKLAVVLAQPRVTFTDTKEILDSVMRHLGFEYELEEVEHPSFIPGRVGKVIVKGKAIGVIGEIHPSVLEKWGIEMPVAGFELFLRPLYTEPYL.

Positions 278–353 (LTPKSFEVEL…IAYGYNEIEP (76 aa)) constitute a B5 domain. The Mg(2+) site is built by aspartate 331, aspartate 337, glutamate 340, and aspartate 341.

This sequence belongs to the phenylalanyl-tRNA synthetase beta subunit family. Type 2 subfamily. In terms of assembly, tetramer of two alpha and two beta subunits. Requires Mg(2+) as cofactor.

Its subcellular location is the cytoplasm. It catalyses the reaction tRNA(Phe) + L-phenylalanine + ATP = L-phenylalanyl-tRNA(Phe) + AMP + diphosphate + H(+). The sequence is that of Phenylalanine--tRNA ligase beta subunit from Thermococcus gammatolerans (strain DSM 15229 / JCM 11827 / EJ3).